The chain runs to 312 residues: Homoserine O-acetyltransferase (312 aa).

Catalysis depends on C142, which acts as the Acyl-thioester intermediate. Substrate is bound by residues K163 and S192. H235 acts as the Proton acceptor in catalysis. The active site involves E237. R249 lines the substrate pocket.

Belongs to the MetA family.

It localises to the cytoplasm. The catalysed reaction is L-homoserine + acetyl-CoA = O-acetyl-L-homoserine + CoA. The protein operates within amino-acid biosynthesis; L-methionine biosynthesis via de novo pathway; O-acetyl-L-homoserine from L-homoserine: step 1/1. In terms of biological role, transfers an acetyl group from acetyl-CoA to L-homoserine, forming acetyl-L-homoserine. In Ruegeria pomeroyi (strain ATCC 700808 / DSM 15171 / DSS-3) (Silicibacter pomeroyi), this protein is Homoserine O-acetyltransferase.